We begin with the raw amino-acid sequence, 212 residues long: Large ribosomal subunit protein uL3 (212 aa).

The segment at 119–146 (YQGNIKRWGQSRGPETHGSRYHRIPGSM) is disordered.

The protein belongs to the universal ribosomal protein uL3 family. In terms of assembly, part of the 50S ribosomal subunit. Forms a cluster with proteins L14 and L19.

In terms of biological role, one of the primary rRNA binding proteins, it binds directly near the 3'-end of the 23S rRNA, where it nucleates assembly of the 50S subunit. This Lactobacillus helveticus (strain DPC 4571) protein is Large ribosomal subunit protein uL3.